Consider the following 40-residue polypeptide: Bomanin Short 6 (40 aa).

The first 18 residues, 1-18 (MKLLSITFLFGLLALASA), serve as a signal peptide directing secretion. Positions 19–23 (NPLSP) are cleaved as a propeptide — removed by a dipeptidylpeptidase. A disulfide bridge links Cys32 with Cys35.

It belongs to the bomanin family.

The protein resides in the secreted. Secreted immune-induced peptide induced by Toll signaling. Has a role in resistance to bacterial and fungal infections. The strength of antimicrobial activity appears to correlate with the overall level of expression. This is Bomanin Short 6 from Drosophila melanogaster (Fruit fly).